The following is an 852-amino-acid chain: Bifunctional heparan sulfate N-deacetylase/N-sulfotransferase 1 (852 aa).

The Cytoplasmic portion of the chain corresponds to 1–13 (MIITPYLNRKITR). A helical; Signal-anchor for type II membrane protein membrane pass occupies residues 14 to 34 (PLKWILALIFLYLIYICLFSN). Residues 34 to 574 (NNSKPPKPRK…PRHHAILPPS (541 aa)) form a heparan sulfate N-deacetylase 1 region. The Lumenal portion of the chain corresponds to 35-852 (NSKPPKPRKK…WLEESVRIRA (818 aa)). N-linked (GlcNAc...) asparagine glycosylation is found at Asn50, Asn72, Asn261, Asn328, Asn377, Asn428, and Asn576. The tract at residues 575–852 (INCTKKSLPD…WLEESVRIRA (278 aa)) is heparan sulfate N-sulfotransferase 1. Lys592 acts as the For sulfotransferase activity in catalysis. 592–596 (KTGST) is a binding site for 3'-phosphoadenylyl sulfate. N-linked (GlcNAc...) asparagine glycosylation occurs at Asn607. A 3'-phosphoadenylyl sulfate-binding site is contributed by Ser686. An N-linked (GlcNAc...) asparagine glycan is attached at Asn712. Cys789 and Cys798 are joined by a disulfide. 803 to 807 (KGRKY) lines the 3'-phosphoadenylyl sulfate pocket.

The protein belongs to the sulfotransferase 1 family. NDST subfamily. In terms of assembly, monomer. Present in some specific neurons in head and tail regions and muscles.

The protein resides in the golgi apparatus membrane. The enzyme catalyses alpha-D-glucosaminyl-[heparan sulfate](n) + 3'-phosphoadenylyl sulfate = N-sulfo-alpha-D-glucosaminyl-[heparan sulfate](n) + adenosine 3',5'-bisphosphate + 2 H(+). The protein operates within glycan metabolism; heparan sulfate biosynthesis. It participates in glycan metabolism; heparin biosynthesis. In terms of biological role, essential bifunctional enzyme that catalyzes both the N-deacetylation and the N-sulfation of glucosamine (GlcNAc) of the glycosaminoglycan in heparan sulfate. Modifies the GlcNAc-GlcA disaccharide repeating sugar backbone to make N-sulfated heparosan, a prerequisite substrate for later modifications in heparin biosynthesis. This Caenorhabditis elegans protein is Bifunctional heparan sulfate N-deacetylase/N-sulfotransferase 1 (hst-1).